The sequence spans 200 residues: Large ribosomal subunit protein uL4 (200 aa).

Positions 38 to 67 are disordered; sequence GRQGSKAQKTRSEVSGGGKKPWRQKGTGRA.

It belongs to the universal ribosomal protein uL4 family. In terms of assembly, part of the 50S ribosomal subunit.

In terms of biological role, one of the primary rRNA binding proteins, this protein initially binds near the 5'-end of the 23S rRNA. It is important during the early stages of 50S assembly. It makes multiple contacts with different domains of the 23S rRNA in the assembled 50S subunit and ribosome. Forms part of the polypeptide exit tunnel. The polypeptide is Large ribosomal subunit protein uL4 (Pseudomonas paraeruginosa (strain DSM 24068 / PA7) (Pseudomonas aeruginosa (strain PA7))).